The following is a 700-amino-acid chain: UvrABC system protein B (700 aa).

The 158-residue stretch at 26–183 (SGLHRGDRIQ…RALVGIQYLR (158 aa)) folds into the Helicase ATP-binding domain. ATP is bound at residue 39–46 (GVTGSGKT). A Beta-hairpin motif is present at residues 92 to 115 (YYDYYQPEAYVPSSDTYIEKDASI). One can recognise a Helicase C-terminal domain in the interval 430-596 (QVDDLLHEIR…GVTKSVDEVR (167 aa)). The disordered stretch occupies residues 608-627 (REGEAPAPRRLASESAPRSR). A UVR domain is found at 631-666 (ETLVGELEIAMREAAVALDFEAAARLRDQLFEVRTA). The disordered stretch occupies residues 667 to 700 (LGQAPSEARGNAQAPKRPPGSAPQRRAGGGRRGR).

The protein belongs to the UvrB family. Forms a heterotetramer with UvrA during the search for lesions. Interacts with UvrC in an incision complex.

The protein resides in the cytoplasm. In terms of biological role, the UvrABC repair system catalyzes the recognition and processing of DNA lesions. A damage recognition complex composed of 2 UvrA and 2 UvrB subunits scans DNA for abnormalities. Upon binding of the UvrA(2)B(2) complex to a putative damaged site, the DNA wraps around one UvrB monomer. DNA wrap is dependent on ATP binding by UvrB and probably causes local melting of the DNA helix, facilitating insertion of UvrB beta-hairpin between the DNA strands. Then UvrB probes one DNA strand for the presence of a lesion. If a lesion is found the UvrA subunits dissociate and the UvrB-DNA preincision complex is formed. This complex is subsequently bound by UvrC and the second UvrB is released. If no lesion is found, the DNA wraps around the other UvrB subunit that will check the other stand for damage. This is UvrABC system protein B from Gemmatimonas aurantiaca (strain DSM 14586 / JCM 11422 / NBRC 100505 / T-27).